Consider the following 328-residue polypeptide: Phenylalanine--tRNA ligase alpha subunit (328 aa).

E253 lines the Mg(2+) pocket.

It belongs to the class-II aminoacyl-tRNA synthetase family. Phe-tRNA synthetase alpha subunit type 1 subfamily. In terms of assembly, tetramer of two alpha and two beta subunits. Mg(2+) is required as a cofactor.

The protein localises to the cytoplasm. It carries out the reaction tRNA(Phe) + L-phenylalanine + ATP = L-phenylalanyl-tRNA(Phe) + AMP + diphosphate + H(+). The sequence is that of Phenylalanine--tRNA ligase alpha subunit from Chromobacterium violaceum (strain ATCC 12472 / DSM 30191 / JCM 1249 / CCUG 213 / NBRC 12614 / NCIMB 9131 / NCTC 9757 / MK).